The primary structure comprises 460 residues: UDP-glycosyltransferase 91C1 (460 aa).

Residues Thr283, 335 to 337 (VPQ), 352 to 360 (HCGWNSVVE), and 374 to 377 (LNEQ) contribute to the UDP-alpha-D-glucose site.

Belongs to the UDP-glycosyltransferase family.

The sequence is that of UDP-glycosyltransferase 91C1 (UGT91C1) from Arabidopsis thaliana (Mouse-ear cress).